The primary structure comprises 232 residues: Histone H1-II (232 aa).

A compositionally biased stretch (low complexity) spans 1-18 (MSDPAPEVAPAAPVASPA). 2 disordered regions span residues 1–44 (MSDP…PPVS) and 103–232 (GKGA…AKKA). In terms of domain architecture, H15 spans 39–114 (THPPVSEMVV…GASGSFKLPA (76 aa)). 2 stretches are compositionally biased toward basic residues: residues 149–171 (SIAK…KSTK) and 179–232 (AAKK…AKKA).

It belongs to the histone H1/H5 family.

It is found in the nucleus. It localises to the chromosome. Histones H1 are necessary for the condensation of nucleosome chains into higher-order structures. This Glyptotendipes barbipes (Midge) protein is Histone H1-II.